A 57-amino-acid chain; its full sequence is Large ribosomal subunit protein bL32 (57 aa).

The disordered stretch occupies residues 1 to 38 (MAVQQNKPTRSKRGMRRSHDALTAVTSLSVDQTSGEKH). Over residues 24 to 33 (AVTSLSVDQT) the composition is skewed to polar residues.

Belongs to the bacterial ribosomal protein bL32 family.

This chain is Large ribosomal subunit protein bL32, found in Enterobacter sp. (strain 638).